The following is a 601-amino-acid chain: Elongation factor 4 (601 aa).

The region spanning 6 to 188 (KFTRNFSIIA…AICYLLPPPV (183 aa)) is the tr-type G domain. GTP is bound by residues 18 to 23 (DHGKST) and 135 to 138 (NKID).

This sequence belongs to the TRAFAC class translation factor GTPase superfamily. Classic translation factor GTPase family. LepA subfamily.

The protein resides in the cell inner membrane. The catalysed reaction is GTP + H2O = GDP + phosphate + H(+). In terms of biological role, required for accurate and efficient protein synthesis under certain stress conditions. May act as a fidelity factor of the translation reaction, by catalyzing a one-codon backward translocation of tRNAs on improperly translocated ribosomes. Back-translocation proceeds from a post-translocation (POST) complex to a pre-translocation (PRE) complex, thus giving elongation factor G a second chance to translocate the tRNAs correctly. Binds to ribosomes in a GTP-dependent manner. This is Elongation factor 4 from Leptospira biflexa serovar Patoc (strain Patoc 1 / Ames).